Consider the following 169-residue polypeptide: Endoribonuclease YbeY (169 aa).

Positions G72 to E95 are disordered. Zn(2+)-binding residues include H131, H135, and H141.

The protein belongs to the endoribonuclease YbeY family. Zn(2+) is required as a cofactor.

Its subcellular location is the cytoplasm. In terms of biological role, single strand-specific metallo-endoribonuclease involved in late-stage 70S ribosome quality control and in maturation of the 3' terminus of the 16S rRNA. The protein is Endoribonuclease YbeY of Oleidesulfovibrio alaskensis (strain ATCC BAA-1058 / DSM 17464 / G20) (Desulfovibrio alaskensis).